The following is a 370-amino-acid chain: tRNA-specific 2-thiouridylase MnmA (370 aa).

ATP is bound by residues Ala7 to Ser14 and Met34. The interaction with target base in tRNA stretch occupies residues Asn104–Asp106. Cys109 acts as the Nucleophile in catalysis. A disulfide bridge connects residues Cys109 and Cys202. Gly134 contacts ATP. The interaction with tRNA stretch occupies residues Lys152–Gln154. The Cysteine persulfide intermediate role is filled by Cys202. An interaction with tRNA region spans residues Arg308–Tyr309.

This sequence belongs to the MnmA/TRMU family.

Its subcellular location is the cytoplasm. The enzyme catalyses S-sulfanyl-L-cysteinyl-[protein] + uridine(34) in tRNA + AH2 + ATP = 2-thiouridine(34) in tRNA + L-cysteinyl-[protein] + A + AMP + diphosphate + H(+). In terms of biological role, catalyzes the 2-thiolation of uridine at the wobble position (U34) of tRNA, leading to the formation of s(2)U34. This Mycoplasma mobile (strain ATCC 43663 / 163K / NCTC 11711) (Mesomycoplasma mobile) protein is tRNA-specific 2-thiouridylase MnmA.